A 192-amino-acid polypeptide reads, in one-letter code: Ferritin-like protein (192 aa).

Fe(3+)-binding residues include His44, Glu48, and His102. A linker region spans residues 143–179 (RFDHDYADPHAHHDEHRDHLADMPSAGSSHEEVQPVA). Residues 149-163 (ADPHAHHDEHRDHLA) show a composition bias toward basic and acidic residues. A disordered region spans residues 149–192 (ADPHAHHDEHRDHLADMPSAGSSHEEVQPVAHKKKGFTVGSLIQ). Residues 180 to 192 (HKKKGFTVGSLIQ) are targeting peptide.

Homodimer, with 2 Fe atoms bound at the subunit interface (without encapsulin), probably also a dimer when encapsulated. 42 electron-dense accretions can be seen inside the nanocompartment which are probably this cargo protein, although perhaps up to one cargo dimer can be bound per shell protein.

The protein localises to the encapsulin nanocompartment. It catalyses the reaction 4 Fe(2+) + O2 + 4 H(+) = 4 Fe(3+) + 2 H2O. In terms of biological role, cargo protein of a type 1 encapsulin nanocompartment. A ferritin-like iron-binding protein probably involved in iron mineralization in the encapsulin nanocompartment. Has ferroxidase activity even when encapsulated, the rate is probably controlled by the rate of Fe flux across the nanocompartment pores. Part of the iron-mineralizing encapsulin-associated Firmicute (IMEF) system. 2 different cargo proteins have been identified (IMEF and Fer); when both are expressed in E.coli with the shell protein only IMEF is detected within the nanocompartment. E.coli expressing all 3 genes stores the largest amount of iron and is protected from Fe/H2O2-induced oxidative stress. The chain is Ferritin-like protein from Bacillus thermotolerans (Quasibacillus thermotolerans).